The following is a 1120-amino-acid chain: Putative GTPase-activating protein AN11010 (1120 aa).

The Rab-GAP TBC domain maps to 291 to 479 (GLPNRLRGEI…RVLDVFFLEG (189 aa)). Disordered stretches follow at residues 673 to 702 (DSPG…PSPA), 859 to 903 (DEVK…PNNP), 960 to 979 (AAKQ…SGGI), 1017 to 1068 (RNAL…ETDR), and 1081 to 1120 (GKDD…EFES). Residues 864-878 (ESTPSPEGETPGTPS) are compositionally biased toward low complexity. Polar residues predominate over residues 960-970 (AAKQQPTSSGP). Acidic residues predominate over residues 1023–1032 (DDDDEDDEDD). 2 stretches are compositionally biased toward basic and acidic residues: residues 1057–1068 (DPERRSVRETDR) and 1081–1095 (GKDD…DSHQ).

This chain is Putative GTPase-activating protein AN11010, found in Emericella nidulans (strain FGSC A4 / ATCC 38163 / CBS 112.46 / NRRL 194 / M139) (Aspergillus nidulans).